The chain runs to 62 residues: Large ribosomal subunit protein uL30 (62 aa).

Belongs to the universal ribosomal protein uL30 family. In terms of assembly, part of the 50S ribosomal subunit.

The polypeptide is Large ribosomal subunit protein uL30 (Nitrosospira multiformis (strain ATCC 25196 / NCIMB 11849 / C 71)).